Reading from the N-terminus, the 309-residue chain is Probable manganese-dependent inorganic pyrophosphatase (309 aa).

Mn(2+) contacts are provided by His9, Asp13, Asp15, Asp75, His97, and Asp149.

Belongs to the PPase class C family. It depends on Mn(2+) as a cofactor.

It localises to the cytoplasm. The catalysed reaction is diphosphate + H2O = 2 phosphate + H(+). This is Probable manganese-dependent inorganic pyrophosphatase from Lactiplantibacillus plantarum (strain ATCC BAA-793 / NCIMB 8826 / WCFS1) (Lactobacillus plantarum).